We begin with the raw amino-acid sequence, 328 residues long: dTDP-glucose 4,6-dehydratase (328 aa).

NAD(+)-binding positions include 13 to 14 (FI), 37 to 40 (DALT), 63 to 64 (DI), 82 to 86 (LAAES), and threonine 101. Substrate is bound at residue serine 86. Threonine 126 provides a ligand contact to substrate. The active-site Proton donor is the aspartate 127. Residues glutamate 128 and tyrosine 150 each act as proton acceptor in the active site. An NAD(+)-binding site is contributed by 150-154 (YSASK). Residue asparagine 179 participates in substrate binding. Residue asparagine 180 participates in NAD(+) binding. Substrate contacts are provided by residues 189-190 (KL), 205-207 (PLY), arginine 214, asparagine 249, and 272-276 (DRKGH).

It belongs to the NAD(P)-dependent epimerase/dehydratase family. dTDP-glucose dehydratase subfamily. In terms of assembly, homodimer. NAD(+) serves as cofactor.

The enzyme catalyses dTDP-alpha-D-glucose = dTDP-4-dehydro-6-deoxy-alpha-D-glucose + H2O. It functions in the pathway antibiotic biosynthesis; streptomycin biosynthesis. Functionally, involved in the biosynthesis of the streptose moiety of streptomycin. Catalyzes the dehydration of dTDP-D-glucose to form dTDP-6-deoxy-D-xylo-4-hexulose via a three-step process involving oxidation, dehydration and reduction. The protein is dTDP-glucose 4,6-dehydratase of Streptomyces griseus.